A 377-amino-acid polypeptide reads, in one-letter code: Alanine racemase (377 aa).

K39 acts as the Proton acceptor; specific for D-alanine in catalysis. K39 bears the N6-(pyridoxal phosphate)lysine mark. R137 contributes to the substrate binding site. Y266 serves as the catalytic Proton acceptor; specific for L-alanine. M314 contributes to the substrate binding site.

It belongs to the alanine racemase family. The cofactor is pyridoxal 5'-phosphate.

It catalyses the reaction L-alanine = D-alanine. Its pathway is amino-acid biosynthesis; D-alanine biosynthesis; D-alanine from L-alanine: step 1/1. Its function is as follows. Catalyzes the interconversion of L-alanine and D-alanine. May also act on other amino acids. The protein is Alanine racemase (alr) of Symbiobacterium thermophilum (strain DSM 24528 / JCM 14929 / IAM 14863 / T).